We begin with the raw amino-acid sequence, 1723 residues long: Lymphocyte antigen 75 (1723 aa).

Positions M1–P27 are cleaved as a signal peptide. Residues S28–D1667 are Extracellular-facing. Residues N33–D182 form the Ricin B-type lectin domain. N135 is a glycosylation site (N-linked (GlcNAc...) asparagine). In terms of domain architecture, Fibronectin type-II spans S164–L211. Intrachain disulfides connect C169–C194, C183–C209, C247–C340, and C317–C332. A C-type lectin 1 domain is found at Q225–K341. N345 and N377 each carry an N-linked (GlcNAc...) asparagine glycan. 3 C-type lectin domains span residues N368–K486, K493–K625, and S652–Q791. Cystine bridges form between C389–C485 and C462–C477. N529 carries N-linked (GlcNAc...) asparagine glycosylation. Intrachain disulfides connect C597–C614, C678–C790, and C752–C782. 2 N-linked (GlcNAc...) asparagine glycosylation sites follow: N843 and N865. Residue Y934 is modified to Phosphotyrosine. Residues N935, N1077, and N1104 are each glycosylated (N-linked (GlcNAc...) asparagine). Residues F959–K1092 form the C-type lectin 5 domain. Cysteines 1061 and 1081 form a disulfide. Residues Y1111–Y1223 form the C-type lectin 6 domain. Residues C1198 and C1212 are joined by a disulfide bond. Residues N1226, N1321, and N1393 are each glycosylated (N-linked (GlcNAc...) asparagine). Residues F1252–Q1375 enclose the C-type lectin 7 domain. 2 consecutive C-type lectin domains span residues Y1402 to K1514 and Y1543 to I1662. Residues C1489 and C1503 are joined by a disulfide bond. 2 N-linked (GlcNAc...) asparagine glycosylation sites follow: N1594 and N1627. Cysteines 1636 and 1651 form a disulfide. A helical transmembrane segment spans residues Y1668 to L1692. The Cytoplasmic portion of the chain corresponds to Q1693 to D1723. S1704 and S1720 each carry phosphoserine.

In terms of processing, N-glycosylated. In terms of tissue distribution, expressed in dendritic and thymic epithelial cells and lymph nodes.

It localises to the membrane. Functionally, acts as an endocytic receptor to direct captured antigens from the extracellular space to a specialized antigen-processing compartment. Causes reduced proliferation of B lymphocytes. This Mus musculus (Mouse) protein is Lymphocyte antigen 75 (Ly75).